Consider the following 314-residue polypeptide: Coiled-coil domain-containing protein 92 (314 aa).

Coiled coils occupy residues 1–27 and 59–113; these read MAATNLENQLHSAQKNLLFLQREHAST and DSSS…EKKY. 2 disordered regions span residues 153 to 193 and 251 to 314; these read LSSS…KKSL and ASDR…DRTV. The span at 176-186 shows a compositional bias: basic and acidic residues; sequence PPKDKLPETPR. Ser192 is modified (phosphoserine). Basic residues predominate over residues 266–280; sequence KPHKTHVGVAHRIHH.

In terms of assembly, interacts with CEP164. Post-translationally, phosphorylated at Ser-192 by TTBK2.

Its subcellular location is the cytoplasm. It localises to the cytoskeleton. It is found in the microtubule organizing center. The protein localises to the centrosome. The protein resides in the centriole. Its function is as follows. Interferon-stimulated protein that plays a role in innate immunity. This Mus musculus (Mouse) protein is Coiled-coil domain-containing protein 92 (Ccdc92).